Here is a 613-residue protein sequence, read N- to C-terminus: UvrABC system protein C (613 aa).

Residues 20–98 (ERPGVYLMYD…IKRHKPRYNI (79 aa)) form the GIY-YIG domain. The 36-residue stretch at 209 to 244 (FDVIESLGHKMQQASDEFEFEKAALYRDKISALRAI) folds into the UVR domain.

The protein belongs to the UvrC family. As to quaternary structure, interacts with UvrB in an incision complex.

It is found in the cytoplasm. In terms of biological role, the UvrABC repair system catalyzes the recognition and processing of DNA lesions. UvrC both incises the 5' and 3' sides of the lesion. The N-terminal half is responsible for the 3' incision and the C-terminal half is responsible for the 5' incision. The polypeptide is UvrABC system protein C (Hydrogenovibrio crunogenus (strain DSM 25203 / XCL-2) (Thiomicrospira crunogena)).